A 425-amino-acid polypeptide reads, in one-letter code: MQITLIGVHQRNTPVTVRERLAFNLYELPDALLALRRYVDEGIILSTCNRVEVCAVTRNGVAGDEALKTFLVEQRGVDQALFAPSLYVYHNEAVVRHLYRLAAGLDSMVLGEDQIVGQVKEALAIAHAAGAIGPVLHRVLHGALAAGKRARTHTGIATGHVSVVSVAIDAMRQYPDLLKRGRALVIGAGHIAELSLKHLLAGGCSAITIVNRTEARADALAQRYGVAWRPWSDLEDALAASDIVVSCTSAPGIVLSQQMVERAAAGRSTPLLLFDLAVPRDIDQGVAEIPGVYLHDVDALEPICRTNRALRAAEAERAETIIEGEVAKFMEWWAVQQAVPTIRALRKRAEDIRDAEIRRALARCPELSPQQRETVIALSTAIINKLLHEPIVALRDPEASGELLTAVRRLFNIDDTAVYTSANMT.

Residues 47–50 (TCNR), Ser107, 112–114 (EDQ), and Gln118 each bind substrate. The active-site Nucleophile is the Cys48. An NADP(+)-binding site is contributed by 187 to 192 (GAGHIA).

Belongs to the glutamyl-tRNA reductase family. In terms of assembly, homodimer.

The enzyme catalyses (S)-4-amino-5-oxopentanoate + tRNA(Glu) + NADP(+) = L-glutamyl-tRNA(Glu) + NADPH + H(+). It participates in porphyrin-containing compound metabolism; protoporphyrin-IX biosynthesis; 5-aminolevulinate from L-glutamyl-tRNA(Glu): step 1/2. The protein operates within porphyrin-containing compound metabolism; chlorophyll biosynthesis. In terms of biological role, catalyzes the NADPH-dependent reduction of glutamyl-tRNA(Glu) to glutamate 1-semialdehyde (GSA). This Roseiflexus sp. (strain RS-1) protein is Glutamyl-tRNA reductase.